The following is a 101-amino-acid chain: MIDIGRELQVAINTGKVIIGLRETKKSLLTGAPKLVIIAANAPRWAREDIEYYAKLAGVPIFTFPGSSIELGAAAKRPHKIMALAVVDPGQSEILKLVEHA.

The protein belongs to the eukaryotic ribosomal protein eL30 family.

The polypeptide is Large ribosomal subunit protein eL30 (Pyrobaculum calidifontis (strain DSM 21063 / JCM 11548 / VA1)).